The chain runs to 201 residues: UPF0301 protein BP0319 (201 aa).

This sequence belongs to the UPF0301 (AlgH) family.

The protein is UPF0301 protein BP0319 of Bordetella pertussis (strain Tohama I / ATCC BAA-589 / NCTC 13251).